A 606-amino-acid polypeptide reads, in one-letter code: NADH-ubiquinone oxidoreductase chain 5 (606 aa).

15 helical membrane passes run 4–24 (FSSL…MMSL), 43–63 (AFIT…ELII), 87–107 (MMFT…SMWY), 117–137 (FFKY…ANNL), 140–160 (LFIG…WWYG), 171–191 (AVLY…WFLT), 213–233 (LIGL…HPWL), 241–261 (TPVS…FLLI), 272–292 (FIQS…AMCA), 310–330 (LGLM…LHIC), 366–386 (MPFT…MPFL), 413–433 (LIAT…ALLG), 457–477 (LLIG…PTTI), 482–502 (MPYY…ILAL), and 582–602 (GLIK…MMLF).

In terms of assembly, core subunit of respiratory chain NADH dehydrogenase (Complex I) which is composed of 45 different subunits.

The protein resides in the mitochondrion inner membrane. The catalysed reaction is a ubiquinone + NADH + 5 H(+)(in) = a ubiquinol + NAD(+) + 4 H(+)(out). Functionally, core subunit of the mitochondrial membrane respiratory chain NADH dehydrogenase (Complex I) which catalyzes electron transfer from NADH through the respiratory chain, using ubiquinone as an electron acceptor. Essential for the catalytic activity and assembly of complex I. The sequence is that of NADH-ubiquinone oxidoreductase chain 5 (MT-ND5) from Bos indicus (Zebu).